The chain runs to 6199 residues: Adhesion G-protein coupled receptor V1 (6199 aa).

Positions 1-23 are cleaved as a signal peptide; it reads MPAVLALSGLLLMLLTVSVRSES. Calx-beta domains follow at residues 24–109, 126–230, 249–355, 380–480, 637–737, 753–853, 869–972, 997–1083, 1099–1199, 1434–1534, 1563–1655, 1835–1937, 1963–2063, 2092–2190, 2208–2308, 2425–2525, 2582–2659, 2673–2773, 2814–2908, 2931–3029, and 3054–3154; these read AELR…VFIL, ATIT…VQLT, ISRN…QVVL, DKPY…LKLI, PDIA…ILTL, SREI…VVLS, NITV…ITLL, IYFA…YIVL, TVVI…LRLM, PIPG…FYLQ, GLFS…RVRL, IIVT…VRLT, LFVF…FLEL, QVII…RIEL, ITIL…KVEL, AAFC…FIIK, VREE…QIGL, DTVT…RVIL, PSSL…LVNI, EIII…QLIL, and GHGI…TVTL. Residues 24 to 5803 are Extracellular-facing; it reads AELRFQGQTQ…IESLASFNEA (5780 aa). EAR repeat units lie at residues 3239-3284, 3285-3333, 3336-3372, 3374-3420, 3422-3467, and 3471-3513; these read VLAV…KWQG, VFVP…RVQA, NLTL…VWNR, SFFL…QWTD, RFQN…LWGS, and VFQQ…SWRS. Calx-beta domains follow at residues 3562-3605, 3619-3719, 3778-3854, 3916-3985, 4000-4103, 4120-4220, 4247-4335, 4371-4471, 4493-4593, 4615-4715, 4993-5076, 5125-5225, and 5260-5360; these read SNQS…RVSL, QVTF…TIVL, ITLS…FVNI, VLRL…MVKL, VVVS…IQLL, VVIR…QLRL, HGLF…FLNI, VIIQ…LQLT, DSPN…IIML, KFGD…TLRL, QHLV…VNLT, SEDS…IYLS, and VGFS…LVEV. The GAIN-B domain occupies 5636 to 5801; that stretch reads PYFTIAAHHW…AEIESLASFN (166 aa). Cystine bridges form between Cys5751–Cys5780 and Cys5768–Cys5782. Residues 5751–5801 form a GPS region; that stretch reads CLLWNQAAESWLSDGQFCRLVDDTQNYVECACSHLSIYTAYAEIESLASFN. The chain crosses the membrane as a helical span at residues 5804–5824; sequence FYAAGFICISGFALAMVSHLM. Residues 5825 to 5834 are Cytoplasmic-facing; that stretch reads CARFLMFAAK. The helical transmembrane segment at 5835 to 5855 threads the bilayer; sequence LLTHMMVACLGTQICFLVSAF. Over 5856–5864 the chain is Extracellular; it reads RGRMFSEDS. Residues 5865–5885 traverse the membrane as a helical segment; that stretch reads CAALGLFFHYFHLSQFGWMLV. Topologically, residues 5886-5908 are cytoplasmic; it reads QAINFWQILVMNDEHTERRYLLY. A helical membrane pass occupies residues 5909–5929; that stretch reads FLLSWGLPALVIIVLVVVLLG. The Extracellular segment spans residues 5930–5954; it reads GFGWSIHSVYGLVQGDLCFIPNVYA. The helical transmembrane segment at 5955-5975 threads the bilayer; sequence ALCTAALVPLICLVGVLVIFI. Residues 5976-6001 lie on the Cytoplasmic side of the membrane; that stretch reads HAYQVTQQWKAYDDIYRGRTNSSEVP. A helical membrane pass occupies residues 6002-6022; that stretch reads MMLYLFALVTLVCVWAGLHMA. The Extracellular portion of the chain corresponds to 6023 to 6025; sequence YRY. A helical membrane pass occupies residues 6026 to 6046; the sequence is IWMLILLVIFNIFLGLYVFSV. Topologically, residues 6047–6199 are cytoplasmic; it reads YFVMHNQLFW…RRIPIADTHL (153 aa).

This sequence belongs to the G-protein coupled receptor 2 family. Adhesion G-protein coupled receptor (ADGR) subfamily. In terms of assembly, heterodimer of 2 chains generated by proteolytic processing; the large extracellular N-terminal fragment and the membrane-bound C-terminal fragment predominantly remain associated and non-covalently linked. In terms of processing, autoproteolytically processed at the GPS region of the GAIN-B domain; this cleavage modulates receptor activity.

It is found in the cell membrane. The protein resides in the cell projection. It localises to the stereocilium membrane. Its subcellular location is the photoreceptor inner segment. Functionally, receptor that may have an important role in the development of the sensory nervous system. The chain is Adhesion G-protein coupled receptor V1 (adgrv1) from Danio rerio (Zebrafish).